A 310-amino-acid chain; its full sequence is MGIFMIKRLKKRDVKVPLTVPEDRKEEYIKNYLELTKRTGNVMLFAGDQKIEHLNDDFFGEGIAKDDASPEHLFNIASKGKICGFATQLGLIARYGMDYKKIPYIVKINSKTHLVKTRDPISRALVHVKDVVDLKENSGLKILGVGYTIYPGSEYEHIMFEEASRVILEAHKHGLIAIIWSYPRGKNVKDEKDPHLIAGAAGVAACLGADFVKVNYPKCDNPAERFKEAVLAAGRTGVLCAGGKSIEPEKFLKQIWEQINISGARGNATGRNIHQKPLDAAIRMCNAIYAITIEGKSLEEALKIYYGDRK.

Substrate contacts are provided by residues 48-49 (DQ), H53, D57, and W180. Residue Y182 is the Proton donor of the active site. Residues R184, 213 to 215 (KVN), 241 to 243 (AGG), and 270 to 271 (GR) each bind substrate. K213 acts as the Schiff-base intermediate with dihydroxyacetone-P in catalysis. The active-site Schiff-base intermediate with substrate is the K213.

Belongs to the DeoC/FbaB aldolase family.

The catalysed reaction is beta-D-fructose 1,6-bisphosphate = D-glyceraldehyde 3-phosphate + dihydroxyacetone phosphate. It catalyses the reaction beta-D-fructose 1,6-bisphosphate + methylglyoxal = 1-deoxy-D-threo-hexo-2,5-diulose 6-phosphate + D-glyceraldehyde 3-phosphate. It carries out the reaction beta-D-fructose 1-phosphate + methylglyoxal = 1-deoxy-D-threo-hexo-2,5-diulose 6-phosphate + D-glyceraldehyde. Its pathway is aromatic compound metabolism. Functionally, catalyzes the transaldolization of either fructose-1-P or fructose-1,6-bisphosphate with methylglyoxal to produce 6-deoxy-5-ketofructose-1-phosphate (DKFP). Also catalyzes the reversible aldol condensation of dihydroxyacetone phosphate (DHAP or glycerone-phosphate) with glyceraldehyde 3-phosphate (G3P or GAP) to produce fructose 1,6-bisphosphate (FBP). The protein is Fructose-bisphosphate aldolase/6-deoxy-5-ketofructose 1-phosphate synthase of Methanocaldococcus jannaschii (strain ATCC 43067 / DSM 2661 / JAL-1 / JCM 10045 / NBRC 100440) (Methanococcus jannaschii).